We begin with the raw amino-acid sequence, 388 residues long: Sulfate adenylyltransferase (388 aa).

The protein belongs to the sulfate adenylyltransferase family.

The catalysed reaction is sulfate + ATP + H(+) = adenosine 5'-phosphosulfate + diphosphate. The protein operates within sulfur metabolism; hydrogen sulfide biosynthesis; sulfite from sulfate: step 1/3. This Acaryochloris marina (strain MBIC 11017) protein is Sulfate adenylyltransferase.